Here is a 451-residue protein sequence, read N- to C-terminus: MEISPTKIKSVLLKLIQILFFTISISIYIDLVGNSNNKNNINNNINNEELLLNKQIQIYYWFVGIILFSIAWSIGTFKWLSRFFLTFFIIKSIQQLIQHLPIEFYDKLRNLIVFGTFSKFDFTSTGIITESLPTLYDNFFGGNISPFSIEIIGIQSCLIIFFSTLGFNIYLADKFWLIKTIIVDWIISAILLIIFSITDLLMNQSNVYSVISYIFGSNVLGFGTIKIQEFLWNLSSKYDDKLNSTIIKSTKSNNNNNNNNNNKQDDNIIYDTDSSFNGQSSSSSSSSSSSSSSSSSATTTTTTLVNDNSIISEYVTEKIMIEENGEIKEQEVQVDKLDYSKLNEDQLNAILSEPILETQITTRNVSYHKSTRFINNLIAPENINSRISAKEFVGVIILWVYTISNFIISDYSLLTIPNILVVVGFSGTILTYLSTISAKRLTNKNPSKREC.

A run of 5 helical transmembrane segments spans residues 11–31 (VLLK…YIDL), 56–76 (IQIY…SIGT), 151–171 (IIGI…NIYL), 175–195 (FWLI…LIIF), and 207–227 (VYSV…TIKI). The tract at residues 250–300 (TKSNNNNNNNNNNKQDDNIIYDTDSSFNGQSSSSSSSSSSSSSSSSSATTT) is disordered. Low complexity-rich tracts occupy residues 253–262 (NNNNNNNNNN) and 280–300 (SSSS…ATTT). 2 consecutive transmembrane segments (helical) span residues 392–412 (FVGV…SDYS) and 413–433 (LLTI…LTYL).

The protein localises to the membrane. This is an uncharacterized protein from Dictyostelium discoideum (Social amoeba).